The chain runs to 283 residues: Shikimate dehydrogenase (NADP(+)) (283 aa).

Shikimate contacts are provided by residues 22–24 and T69; that span reads SRS. The Proton acceptor role is filled by K73. Residues N93 and D108 each contribute to the shikimate site. NADP(+)-binding positions include 133–137 and L222; that span reads GAGGS. Y224 is a shikimate binding site. G245 serves as a coordination point for NADP(+).

Belongs to the shikimate dehydrogenase family. In terms of assembly, homodimer.

It carries out the reaction shikimate + NADP(+) = 3-dehydroshikimate + NADPH + H(+). It participates in metabolic intermediate biosynthesis; chorismate biosynthesis; chorismate from D-erythrose 4-phosphate and phosphoenolpyruvate: step 4/7. In terms of biological role, involved in the biosynthesis of the chorismate, which leads to the biosynthesis of aromatic amino acids. Catalyzes the reversible NADPH linked reduction of 3-dehydroshikimate (DHSA) to yield shikimate (SA). The sequence is that of Shikimate dehydrogenase (NADP(+)) from Rhodopseudomonas palustris (strain BisB5).